Here is a 385-residue protein sequence, read N- to C-terminus: Prepilin peptidase EppA (385 aa).

10 helical membrane passes run 1 to 21 (MILM…CFYA), 29 to 49 (GIIP…LNGA), 58 to 78 (WIFI…YILW), 80 to 100 (MVAW…LLPF), 104 to 124 (LVSY…PFPL), 126 to 146 (VIIN…FFII), 166 to 186 (TSMV…LITD), 187 to 207 (FLPF…TMVI), 231 to 251 (FELT…IQLI), and 358 to 378 (PAIF…MILF).

It belongs to the peptidase A24 family.

It is found in the cell membrane. In terms of biological role, peptidase that processes the N-terminus of prepilins. The chain is Prepilin peptidase EppA from Methanothermobacter thermautotrophicus (strain ATCC 29096 / DSM 1053 / JCM 10044 / NBRC 100330 / Delta H) (Methanobacterium thermoautotrophicum).